Consider the following 527-residue polypeptide: Acid-sensing ion channel 1 (527 aa).

Residues 1–49 are Cytoplasmic-facing; sequence MMDLKVDEEEVDSGQPVSIQAFASSSTLHGISHIFSYERLSLKRVVWAL. The helical transmembrane segment at 50 to 71 threads the bilayer; the sequence is CFMGSLALLALVCTNRIQYYFL. Over 72-424 the chain is Extracellular; it reads YPHVTKLDEV…NYETIEQKKA (353 aa). Intrachain disulfides connect Cys94–Cys195, Cys173–Cys180, Cys291–Cys366, Cys309–Cys362, Cys313–Cys360, Cys322–Cys344, and Cys324–Cys336. 2 N-linked (GlcNAc...) asparagine glycosylation sites follow: Asn367 and Asn394. A discontinuously helical transmembrane segment spans residues 425–454; it reads YEVAGLLGDIGGQMGLFIGASILTVLELFD. The GAS motif; ion selectivity filter motif lies at 443-445; sequence GAS. Residues 455-527 are Cytoplasmic-facing; it reads YAYEVIKHRL…ARGTFEDFTC (73 aa).

This sequence belongs to the amiloride-sensitive sodium channel (TC 1.A.6) family. ASIC1 subfamily. Homotrimer. Heterotrimer; with other ASIC proteins producing channel with different properties.

It localises to the cell membrane. It is found in the postsynaptic cell membrane. The protein localises to the cell projection. Its subcellular location is the dendrite. The enzyme catalyses Na(+)(in) = Na(+)(out). It catalyses the reaction Li(+)(in) = Li(+)(out). It carries out the reaction K(+)(in) = K(+)(out). The catalysed reaction is Ca(2+)(in) = Ca(2+)(out). With respect to regulation, inhibited by the diuretic drug amiloride. Inhibited by Cs(1+) ions. Inhibited by the spider venom psalmotoxin-1; this locks the channel into its desensitized conformation. Channel activity is increased by the heterodimeric snake venom neurotoxin composed of MitTx-alpha and MitTx-beta; this slows channel closure and increases the magnitude of the steady-state current that is triggered by low pH. Forms voltage-independent, pH-gated trimeric sodium channels that act as postsynaptic excitatory receptors in the nervous system, playing a crucial role in regulating synaptic plasticity, learning, and memory. Upon extracellular pH drop this channel elicits transient, fast activating, and completely desensitizing inward currents. Displays high selectivity for sodium ions but can also permit the permeation of other cations. Regulates more or less directly intracellular calcium concentration and CaMKII phosphorylation, and thereby the density of dendritic spines. Modulates neuronal activity in the circuits underlying innate fear. This Gallus gallus (Chicken) protein is Acid-sensing ion channel 1.